We begin with the raw amino-acid sequence, 421 residues long: Trimethyllysine dioxygenase, mitochondrial (421 aa).

Residues 1 to 15 constitute a mitochondrion transit peptide; sequence MWYHKLLHQQSRLRN. Lys179 and Lys236 each carry N6-acetyllysine. His242, Asp244, and His389 together coordinate Fe cation.

It belongs to the gamma-BBH/TMLD family. In terms of assembly, homodimer. The cofactor is Fe(2+). L-ascorbate is required as a cofactor.

Its subcellular location is the mitochondrion matrix. It catalyses the reaction N(6),N(6),N(6)-trimethyl-L-lysine + 2-oxoglutarate + O2 = (3S)-3-hydroxy-N(6),N(6),N(6)-trimethyl-L-lysine + succinate + CO2. The protein operates within amine and polyamine biosynthesis; carnitine biosynthesis. Its function is as follows. Converts trimethyllysine (TML) into hydroxytrimethyllysine (HTML). This is Trimethyllysine dioxygenase, mitochondrial (Tmlhe) from Mus musculus (Mouse).